The chain runs to 578 residues: MAEESRKPSAPSPPDQTPEEDLVIVKVEEDHGWDQESSLHENNPLGQEVFRLRFRQLCYQETLGPREALIQLRALCHQWLRPDLNTKEQILELLVLEQFLTILPEELQTLVKEHQLENGEEVVTLLEDLERQIDILGRPVSARVHGHRVLWEEVVHSASAPEPPNTQLQSEATQHKSPVPQESQERAMSTSQSPTRSQKGSSGDQEMTATLLTAGFQTLEKIEDMAVSLIREEWLLDPSQKDLSRDNRPEDFRNVFSLGGETRSENRELASKQVISTGIHPHGETAAKCNGDVIRGLEHEEARDLLGRLERQRGNPTQERRHKCDECGKSFAQSSGLVRHWRIHTGEKPYQCNVCGKAFSYRSALLSHQDIHNKVKRYHCKECGKAFSQNTGLILHQRIHTGEKPYQCNQCGKAFSQSAGLILHQRIHSGERPYECNECGKAFSHSSHLIGHQRIHTGEKPYECDECGKTFRRSSHLIGHQRSHTGEKPYKCNECGRAFSQKSGLIEHQRIHTGERPYKCKECGKAFNGNTGLIQHLRIHTGEKPYQCNECGKAFIQRSSLIRHQRIHSGEKSESISV.

A disordered region spans residues 1 to 20 (MAEESRKPSAPSPPDQTPEE). Position 12 is a phosphoserine (S12). K26 is covalently cross-linked (Glycyl lysine isopeptide (Lys-Gly) (interchain with G-Cter in SUMO2)). The region spanning 51–133 (RLRFRQLCYQ…TLLEDLERQI (83 aa)) is the SCAN box domain. A disordered region spans residues 158 to 205 (ASAPEPPNTQLQSEATQHKSPVPQESQERAMSTSQSPTRSQKGSSGDQ). The span at 165 to 205 (NTQLQSEATQHKSPVPQESQERAMSTSQSPTRSQKGSSGDQ) shows a compositional bias: polar residues. Glycyl lysine isopeptide (Lys-Gly) (interchain with G-Cter in SUMO2) cross-links involve residues K176 and K199. S201 carries the post-translational modification Phosphoserine. The KRAB domain occupies 220-316 (EKIEDMAVSL…GRLERQRGNP (97 aa)). Residues K221, K272, and K288 each participate in a glycyl lysine isopeptide (Lys-Gly) (interchain with G-Cter in SUMO2) cross-link. 2 consecutive C2H2-type zinc fingers follow at residues 322–344 (HKCD…WRIH) and 350–372 (YQCN…QDIH). Glycyl lysine isopeptide (Lys-Gly) (interchain with G-Cter in SUMO2) cross-links involve residues K374 and K376. 7 C2H2-type zinc fingers span residues 378–400 (YHCK…QRIH), 406–428 (YQCN…QRIH), 434–456 (YECN…QRIH), 462–484 (YECD…QRSH), 490–512 (YKCN…QRIH), 518–540 (YKCK…LRIH), and 546–568 (YQCN…QRIH). Glycyl lysine isopeptide (Lys-Gly) (interchain with G-Cter in SUMO2) cross-links involve residues K413 and K441. K502 participates in a covalent cross-link: Glycyl lysine isopeptide (Lys-Gly) (interchain with G-Cter in SUMO2). Residue K572 forms a Glycyl lysine isopeptide (Lys-Gly) (interchain with G-Cter in SUMO2) linkage.

Belongs to the krueppel C2H2-type zinc-finger protein family.

The protein localises to the nucleus. In terms of biological role, may be involved in transcriptional regulation. In Pan troglodytes (Chimpanzee), this protein is Zinc finger protein with KRAB and SCAN domains 8 (ZKSCAN8).